We begin with the raw amino-acid sequence, 335 residues long: 5-dehydro-2-deoxygluconokinase (335 aa).

The protein belongs to the carbohydrate kinase PfkB family.

It carries out the reaction 5-dehydro-2-deoxy-D-gluconate + ATP = 6-phospho-5-dehydro-2-deoxy-D-gluconate + ADP + H(+). It participates in polyol metabolism; myo-inositol degradation into acetyl-CoA; acetyl-CoA from myo-inositol: step 5/7. Catalyzes the phosphorylation of 5-dehydro-2-deoxy-D-gluconate (2-deoxy-5-keto-D-gluconate or DKG) to 6-phospho-5-dehydro-2-deoxy-D-gluconate (DKGP). The polypeptide is 5-dehydro-2-deoxygluconokinase (Geobacillus kaustophilus (strain HTA426)).